A 1020-amino-acid chain; its full sequence is Non-canonical nonribosomal peptide synthetase hkm10 (1020 aa).

Residues 21–419 form an adenylation (A) domain region; that stretch reads QMLEDPDAIA…GRFDHQVKIR (399 aa). A Carrier domain is found at 526 to 608; sequence QDKVPSEGAS…QLAHIVDRNQ (83 aa). S568 is modified (O-(pantetheine 4'-phosphoryl)serine). Positions 652–894 are short-chain dehydrogenase/reductase (R) domain; the sequence is LTGATGFVGA…FVPIDYVTST (243 aa).

Belongs to the NRP synthetase family.

The protein operates within secondary metabolite biosynthesis. Non-canonical nonribosomal peptide synthetase; part of the gene cluster that mediates the biosynthesis of hancockiamides, an unusual new family of N-cinnamoylated piperazines. The NRPS hkm10 and the NmrA-like reductase hkm9 are proposed to convert two molecules of L-Phe to the intermediary piperazine called xenocockiamide A. Xenocockiamide A is then converted to hancockiamide D via a series of hydroxylations and O-methylations. The tyrosinase hkm6 may catalyze an aromatic hydroxylation, then the 2-oxoglutarate-dependent Fe(II) dioxygenase hkm4 and the FAD-dependent phenol hydroxylase hkm7 may catalyze consecutive hydroxylations to install 2 more hydroxy groups, and the methyltransferase hkm8 probably catalyzes two methylations using 2 molecules of S-adenosyl-L-methionine (SAM). The NRPS hkm11 activates and transfers trans-cinnamate supplied by the PAL hkm12 to hancockiamide D and produces hancockiamide A. NRPS Hkm11 has the flexibility to tolerate the bulky hancockiamide G as a substrate and the absence of the acetyl-transferase hkm3 opens up the opportunity for hkm11 to introduce a second N-cinnamoyl moiety. The cytochrome P450 monooxygenase hkm5 catalyzes the methylenedioxy bridge formation, converting hancockiamide A into hancockiamide G. Hkm5 can also convert hancockiamide B into hancockiamide C, and hancockiamide D into hancockiamide H. The N-acetyltransferase hkm3 finally transfers an acetyl group to 1-N of piperazine, converting hancockiamide A into hancockiamide B and hancockiamide G into hancockiamide C. This chain is Non-canonical nonribosomal peptide synthetase hkm10, found in Aspergillus hancockii.